Reading from the N-terminus, the 116-residue chain is Cocaine- and amphetamine-regulated transcript protein (116 aa).

Positions 1 to 27 are cleaved as a signal peptide; sequence MESPRLRLLPLLGAALLLLLPLLGALA. Position 41 is a phosphotyrosine (Tyr41). Residue Ser48 is modified to Phosphoserine. Cystine bridges form between Cys82-Cys100, Cys88-Cys108, and Cys102-Cys115.

Belongs to the CART family.

The protein resides in the secreted. Satiety factor closely associated with the actions of leptin and neuropeptide y; this anorectic peptide inhibits both normal and starvation-induced feeding and completely blocks the feeding response induced by neuropeptide Y and regulated by leptin in the hypothalamus. This chain is Cocaine- and amphetamine-regulated transcript protein (CARTPT), found in Bos taurus (Bovine).